Here is a 349-residue protein sequence, read N- to C-terminus: Hydroxymethylglutaryl-CoA synthase (349 aa).

Positions 29 and 30 each coordinate (3S)-3-hydroxy-3-methylglutaryl-CoA. The active-site Proton donor/acceptor is the Glu81. The (3S)-3-hydroxy-3-methylglutaryl-CoA site is built by Cys113 and Thr154. Catalysis depends on Cys113, which acts as the Acyl-thioester intermediate. Arg202 provides a ligand contact to CoA. Residues Thr204 and His237 each contribute to the (3S)-3-hydroxy-3-methylglutaryl-CoA site. Residue His237 is the Proton donor/acceptor of the active site. Lys242 contributes to the CoA binding site. Residues Arg246, Asn269, and Ser299 each coordinate (3S)-3-hydroxy-3-methylglutaryl-CoA.

The protein belongs to the thiolase-like superfamily. Archaeal HMG-CoA synthase family. As to quaternary structure, interacts with acetoacetyl-CoA thiolase that catalyzes the precedent step in the pathway and with a DUF35 protein. The acetoacetyl-CoA thiolase/HMG-CoA synthase complex channels the intermediate via a fused CoA-binding site, which allows for efficient coupling of the endergonic thiolase reaction with the exergonic HMGCS reaction.

The enzyme catalyses acetoacetyl-CoA + acetyl-CoA + H2O = (3S)-3-hydroxy-3-methylglutaryl-CoA + CoA + H(+). It participates in metabolic intermediate biosynthesis; (R)-mevalonate biosynthesis; (R)-mevalonate from acetyl-CoA: step 2/3. Its function is as follows. Catalyzes the condensation of acetyl-CoA with acetoacetyl-CoA to form 3-hydroxy-3-methylglutaryl-CoA (HMG-CoA). Functions in the mevalonate (MVA) pathway leading to isopentenyl diphosphate (IPP), a key precursor for the biosynthesis of isoprenoid compounds that are building blocks of archaeal membrane lipids. The protein is Hydroxymethylglutaryl-CoA synthase of Methanococcoides burtonii (strain DSM 6242 / NBRC 107633 / OCM 468 / ACE-M).